The primary structure comprises 153 residues: Ribosomal RNA large subunit methyltransferase H (153 aa).

S-adenosyl-L-methionine contacts are provided by residues L70, G102, and 121 to 126; that span reads LSAMTF.

Belongs to the RNA methyltransferase RlmH family. Homodimer.

The protein resides in the cytoplasm. It catalyses the reaction pseudouridine(1915) in 23S rRNA + S-adenosyl-L-methionine = N(3)-methylpseudouridine(1915) in 23S rRNA + S-adenosyl-L-homocysteine + H(+). Functionally, specifically methylates the pseudouridine at position 1915 (m3Psi1915) in 23S rRNA. The protein is Ribosomal RNA large subunit methyltransferase H of Trichlorobacter lovleyi (strain ATCC BAA-1151 / DSM 17278 / SZ) (Geobacter lovleyi).